The primary structure comprises 219 residues: GTP-binding nuclear protein GSP1/CNR1 (219 aa).

Serine 2 carries the post-translational modification N-acetylserine. Residue serine 2 is modified to Phosphoserine. Positions 9–173 (EVPTFKLVLV…LWLARKLAGN (165 aa)) constitute a Small GTPase Ran-type domain. 20 to 27 (DGGTGKTT) contributes to the GTP binding site. Positions 39–47 (KKYIATIGV) are switch-I. Residues glycine 70, 124 to 127 (NKVD), and 152 to 154 (SAK) contribute to the GTP site. The tract at residues 70 to 86 (GQEKFGGLRDGYYINAQ) is switch-II.

It belongs to the small GTPase superfamily. Ran family. In terms of assembly, found in a nuclear export complex with RanGTP, exportin and pre-miRNA. Forms a complex with YRB1. Interacts with BUD5, CEX1, RRP12, SRM1, and DIS3/RRP44.

It is found in the nucleus. In terms of biological role, GTP-binding protein involved in nucleocytoplasmic transport. Required for the import of protein into the nucleus and also for RNA export. Essential for cell viability. By analogy with Ras, Ran may be activated when GTP is exchanged for bound GDP by RCC1 and inactivated when GTP is hydrolyzed by Ran upon activation by RanGAP1. In Saccharomyces cerevisiae (strain ATCC 204508 / S288c) (Baker's yeast), this protein is GTP-binding nuclear protein GSP1/CNR1 (GSP1).